We begin with the raw amino-acid sequence, 233 residues long: Purine nucleoside phosphorylase DeoD-type (233 aa).

Histidine 4 contacts a purine D-ribonucleoside. Phosphate contacts are provided by residues glycine 20, arginine 24, arginine 43, and 87-90 (RIGT). A purine D-ribonucleoside-binding positions include 179–181 (EME) and 203–204 (SD). The Proton donor role is filled by aspartate 204.

It belongs to the PNP/UDP phosphorylase family. In terms of assembly, homohexamer; trimer of homodimers.

It carries out the reaction a purine D-ribonucleoside + phosphate = a purine nucleobase + alpha-D-ribose 1-phosphate. It catalyses the reaction a purine 2'-deoxy-D-ribonucleoside + phosphate = a purine nucleobase + 2-deoxy-alpha-D-ribose 1-phosphate. Its function is as follows. Catalyzes the reversible phosphorolytic breakdown of the N-glycosidic bond in the beta-(deoxy)ribonucleoside molecules, with the formation of the corresponding free purine bases and pentose-1-phosphate. This Helicobacter pylori (strain HPAG1) protein is Purine nucleoside phosphorylase DeoD-type.